Here is a 122-residue protein sequence, read N- to C-terminus: Large ribosomal subunit protein bL12 (122 aa).

Belongs to the bacterial ribosomal protein bL12 family. As to quaternary structure, homodimer. Part of the ribosomal stalk of the 50S ribosomal subunit. Forms a multimeric L10(L12)X complex, where L10 forms an elongated spine to which 2 to 4 L12 dimers bind in a sequential fashion. Binds GTP-bound translation factors.

In terms of biological role, forms part of the ribosomal stalk which helps the ribosome interact with GTP-bound translation factors. Is thus essential for accurate translation. This chain is Large ribosomal subunit protein bL12, found in Aliivibrio fischeri (strain ATCC 700601 / ES114) (Vibrio fischeri).